The following is a 31-amino-acid chain: Cyclotide mech-6 (31 aa).

The cyclopeptide (Gly-Asn) cross-link spans Gly-1–Asn-31. Cystine bridges form between Cys-5/Cys-21, Cys-9/Cys-23, and Cys-14/Cys-28.

Post-translationally, this is a cyclic peptide. In terms of processing, contains 3 disulfide bonds.

Probably participates in a plant defense mechanism (Potential). Binds to and induces leakage in phospholipd membranes, particularly ones containing 1-palmitoyl-2-oleophosphatidylethanolamine (POPE). In Melicytus chathamicus (Chatham Island mahoe), this protein is Cyclotide mech-6.